The primary structure comprises 348 residues: L-threonine 3-dehydrogenase (348 aa).

Cys38 is a binding site for Zn(2+). Catalysis depends on charge relay system residues Thr40 and His43. His63, Glu64, Cys93, Cys96, Cys99, and Cys107 together coordinate Zn(2+). Residues Ile175, Asp195, Arg200, 263–265 (LGI), and 287–288 (IY) contribute to the NAD(+) site.

It belongs to the zinc-containing alcohol dehydrogenase family. In terms of assembly, homotetramer. Requires Zn(2+) as cofactor.

The protein localises to the cytoplasm. The enzyme catalyses L-threonine + NAD(+) = (2S)-2-amino-3-oxobutanoate + NADH + H(+). Its pathway is amino-acid degradation; L-threonine degradation via oxydo-reductase pathway; glycine from L-threonine: step 1/2. In terms of biological role, catalyzes the NAD(+)-dependent oxidation of L-threonine to 2-amino-3-ketobutyrate. The chain is L-threonine 3-dehydrogenase from Deinococcus radiodurans (strain ATCC 13939 / DSM 20539 / JCM 16871 / CCUG 27074 / LMG 4051 / NBRC 15346 / NCIMB 9279 / VKM B-1422 / R1).